Reading from the N-terminus, the 970-residue chain is Toxin subunit YenC2 (970 aa).

RHS repeat units lie at residues 168 to 182 (AGQCVSYYDAAGLIQ), 297 to 311 (GVVTTYTYEAETQRL), 329 to 343 (LQDLRYEYDPVGNVL), 361 to 375 (VPENAYRYDSLYQLV), 408 to 422 (NYTRTYTYDSAGNLM), 500 to 514 (DDSESYRYDGSSQRI), 580 to 594 (NDQIRWSYDNLTCSS), 606 to 620 (SMEEYYPYGGTAVWA), and 640 to 654 (DATGLYYYGFRYYQP). An RHS-repeat associated core domain region spans residues 610-690 (YYPYGGTAVW…PLRLTDPDGM (81 aa)). A deaminase domain region spans residues 849–950 (TEAFITGIRS…YNCSGIISGL (102 aa)).

This sequence belongs to the RHS family. Semipurified toxin complex consists of at least YenA1-YenA2-YenB-YenC1-YenC2-Chi1-Chi2. YenB and the N-terminus of YenC2 form a large hollow shell of beta-strands. The shell is closed at both ends, within which the C-terminus of YenC2 is probably found. The C-terminal region dissociates from the YenB-YenC2 complex at pH 4.5 but not 7.5. The Yen-TC:K9 subcomplex is about 26 nm tall and 22 nm in diameter with 5-fold symmetry and 5 copies of YenA1, YenA2, Chi1 and Chi2; the chitinase subunits may be solvent accessible on the exterior the complex. The Yen-TC:K9 subcomplex has no insecticidal activity. The native complex with additional YenB, YenC1 and YenC2 subunits is 16 nm taller and is insecticidal; the toxicity-conferring subunits are present at about 1 copy each.

It localises to the secreted. Toxin complex is secreted when grown at 25 degrees Celsius or less; at higher temperatures the proteins are present intracellularly but not secreted. Part of an orally active toxin complex (TC) with strong insecticidal effects on larvae of the Coleoptera Costelytra zealandica, Acrossidius tasmania and Adoryphorus couloni and some Lepidoptera larvae. The TC has an endochitinase activity. In Yersinia entomophaga, this protein is Toxin subunit YenC2.